Reading from the N-terminus, the 189-residue chain is Protein GrpE (189 aa).

Basic and acidic residues predominate over residues 1–38; the sequence is MTKSNETERMEESEETHSSDIRSASESDHASGSDHTES. The interval 1–54 is disordered; that stretch reads MTKSNETERMEESEETHSSDIRSASESDHASGSDHTESADEIPTADAEQGELEQ.

Belongs to the GrpE family. As to quaternary structure, homodimer.

The protein localises to the cytoplasm. Functionally, participates actively in the response to hyperosmotic and heat shock by preventing the aggregation of stress-denatured proteins, in association with DnaK and GrpE. It is the nucleotide exchange factor for DnaK and may function as a thermosensor. Unfolded proteins bind initially to DnaJ; upon interaction with the DnaJ-bound protein, DnaK hydrolyzes its bound ATP, resulting in the formation of a stable complex. GrpE releases ADP from DnaK; ATP binding to DnaK triggers the release of the substrate protein, thus completing the reaction cycle. Several rounds of ATP-dependent interactions between DnaJ, DnaK and GrpE are required for fully efficient folding. This Tropheryma whipplei (strain TW08/27) (Whipple's bacillus) protein is Protein GrpE.